Here is a 550-residue protein sequence, read N- to C-terminus: Methionine--tRNA ligase (550 aa).

The short motif at 10–22 (LPYPNNSSPHLGN) is the 'HIGH' region element. The 'KMSKS' region signature appears at 336-340 (KFSKS). Lys339 contacts ATP.

Belongs to the class-I aminoacyl-tRNA synthetase family.

It carries out the reaction tRNA(Met) + L-methionine + ATP = L-methionyl-tRNA(Met) + AMP + diphosphate. The polypeptide is Methionine--tRNA ligase (MARS) (Acanthamoeba polyphaga mimivirus (APMV)).